A 492-amino-acid polypeptide reads, in one-letter code: Protein odr-4 homolog (492 aa).

The segment at 251 to 270 (LQPTSTTGGTATASSNTTDS) is disordered. Low complexity predominate over residues 254-268 (TSTTGGTATASSNTT). The helical transmembrane segment at 469-489 (MVGIAVALLVLLSSVALHFVL) threads the bilayer.

The protein belongs to the ODR-4 family.

The protein resides in the membrane. May play a role in the trafficking of a subset of G-protein coupled receptors. This is Protein odr-4 homolog from Drosophila melanogaster (Fruit fly).